The following is a 142-amino-acid chain: Deoxyuridine 5'-triphosphate nucleotidohydrolase (142 aa).

Residues 62 to 64 (RSG), asparagine 75, and 79 to 81 (TID) each bind substrate.

Belongs to the dUTPase family. It depends on Mg(2+) as a cofactor.

The enzyme catalyses dUTP + H2O = dUMP + diphosphate + H(+). It participates in pyrimidine metabolism; dUMP biosynthesis; dUMP from dCTP (dUTP route): step 2/2. Functionally, this enzyme is involved in nucleotide metabolism: it produces dUMP, the immediate precursor of thymidine nucleotides and it decreases the intracellular concentration of dUTP so that uracil cannot be incorporated into DNA. This Trichodesmium erythraeum (strain IMS101) protein is Deoxyuridine 5'-triphosphate nucleotidohydrolase.